The primary structure comprises 340 residues: Methionine import ATP-binding protein MetN (340 aa).

An ABC transporter domain is found at 6–245 (IEFEGITKVF…PQTNVAKRFV (240 aa)). Position 42–49 (42–49 (GYSGAGKS)) interacts with ATP.

This sequence belongs to the ABC transporter superfamily. Methionine importer (TC 3.A.1.24) family. As to quaternary structure, the complex is composed of two ATP-binding proteins (MetN), two transmembrane proteins (MetI) and a solute-binding protein (MetQ).

It is found in the cell membrane. It catalyses the reaction L-methionine(out) + ATP + H2O = L-methionine(in) + ADP + phosphate + H(+). The catalysed reaction is D-methionine(out) + ATP + H2O = D-methionine(in) + ADP + phosphate + H(+). Its function is as follows. Part of the ABC transporter complex MetNIQ involved in methionine import. Responsible for energy coupling to the transport system. This chain is Methionine import ATP-binding protein MetN, found in Corynebacterium diphtheriae (strain ATCC 700971 / NCTC 13129 / Biotype gravis).